A 379-amino-acid chain; its full sequence is Cytochrome b (379 aa).

The next 4 helical transmembrane spans lie at 33–53, 77–98, 113–133, and 178–198; these read FGSL…FLAM, WLIR…YLHI, WNIG…GYVL, and FFTF…LHLL. Heme b contacts are provided by H83 and H97. Heme b is bound by residues H182 and H196. H201 provides a ligand contact to a ubiquinone. 4 helical membrane-spanning segments follow: residues 226 to 246, 288 to 308, 320 to 340, and 347 to 367; these read YKDL…VLFS, LGGV…PLLH, FSQT…WIGG, and FIII…VVMP.

Belongs to the cytochrome b family. As to quaternary structure, the cytochrome bc1 complex contains 3 respiratory subunits (MT-CYB, CYC1 and UQCRFS1), 2 core proteins (UQCRC1 and UQCRC2) and probably 6 low-molecular weight proteins. It depends on heme b as a cofactor.

Its subcellular location is the mitochondrion inner membrane. In terms of biological role, component of the ubiquinol-cytochrome c reductase complex (complex III or cytochrome b-c1 complex) that is part of the mitochondrial respiratory chain. The b-c1 complex mediates electron transfer from ubiquinol to cytochrome c. Contributes to the generation of a proton gradient across the mitochondrial membrane that is then used for ATP synthesis. The sequence is that of Cytochrome b (MT-CYB) from Iguana iguana (Common iguana).